The sequence spans 402 residues: Multidrug resistance protein MdtH (402 aa).

Residues Met-1–Lys-12 are Cytoplasmic-facing. A helical transmembrane segment spans residues Tyr-13 to Ile-33. At Ser-34–Glu-98 the chain is on the periplasmic side. The chain crosses the membrane as a helical span at residues Pro-99–Phe-116. Residues Asp-117–Ser-138 lie on the Cytoplasmic side of the membrane. The chain crosses the membrane as a helical span at residues Leu-139–Leu-159. Residues Gln-160–Arg-164 lie on the Periplasmic side of the membrane. The helical transmembrane segment at Leu-165 to Leu-185 threads the bilayer. At Pro-186–Tyr-213 the chain is on the cytoplasmic side. Residues Val-214–Met-234 traverse the membrane as a helical segment. The Periplasmic portion of the chain corresponds to Val-235 to Ser-243. The helical transmembrane segment at Ala-244–Ala-264 threads the bilayer. Over Arg-265–Arg-276 the chain is Cytoplasmic. Residues Leu-277–Leu-297 traverse the membrane as a helical segment. The Periplasmic portion of the chain corresponds to Gln-298 to Gln-299. A helical transmembrane segment spans residues Leu-300–Thr-320. The Cytoplasmic segment spans residues Leu-321–Arg-339. Residues Leu-340 to Gly-360 form a helical membrane-spanning segment. The Periplasmic segment spans residues Lys-361 to Glu-367. Residues Leu-368–Phe-388 form a helical membrane-spanning segment. Residues Ser-389–Ala-402 lie on the Cytoplasmic side of the membrane.

It belongs to the major facilitator superfamily. DHA1 family. MdtH (TC 2.A.1.2.21) subfamily.

The protein localises to the cell inner membrane. Confers resistance to norfloxacin and enoxacin. This chain is Multidrug resistance protein MdtH, found in Escherichia coli O7:K1 (strain IAI39 / ExPEC).